Reading from the N-terminus, the 397-residue chain is Presenilin-like protein At2g29900 (397 aa).

At 1-17 (MDRNQRPRSILDSLGEE) the chain is on the cytoplasmic side. Residues 18–38 (LIAILTPVSICMFTVVLLVCI) traverse the membrane as a helical segment. The Lumenal segment spans residues 39 to 76 (LNSDPSSSSASFSSIATAAYSESDSDSSWDKFVGALLN). Residues 77-97 (SVVFVAAITVATFVLVLLFYL) form a helical membrane-spanning segment. Topologically, residues 98–106 (RCVKFLKFY) are cytoplasmic. A helical transmembrane segment spans residues 107-127 (MGFSAFIVLGNLGGEILVLLI). At 128–135 (DRFRFPID) the chain is on the lumenal side. The chain crosses the membrane as a helical span at residues 136–156 (SITFLILLFNFSVVGVFAVFM). The Cytoplasmic segment spans residues 157 to 158 (SK). Residues 159–179 (FSILITQGYLVWIGVLVAYFF) form a helical membrane-spanning segment. At 180 to 188 (TLLPEWTTW) the chain is on the lumenal side. A helical transmembrane segment spans residues 189–209 (VLLVALALYDIAAVLLPVGPL). Asp198 is an active-site residue. Over 210-305 (RLLVEMAISR…NSETFLEGIG (96 aa)) the chain is Cytoplasmic. The helical transmembrane segment at 306–326 (LGSSGAIKLGLGDFIFYSVLV) threads the bilayer. Asp318 is an active-site residue. The Lumenal segment spans residues 327 to 336 (GRAAMYDLMT). The helical transmembrane segment at 337-357 (VYACYLAIIAGLGITLMLLSV) threads the bilayer. Over 358–366 (YQKALPALP) the chain is Cytoplasmic. The PAL motif lies at 363–365 (PAL). Positions 367 to 387 (VSIMLGVVFYFLARLLLEVFV) form an intramembrane region, helical. Over 388-397 (VQCSSNLVMF) the chain is Cytoplasmic.

Belongs to the peptidase A22A family. In terms of assembly, homodimer. Probable component of the gamma-secretase complex, a complex composed of a presenilin homodimer, nicastrin, APH1 and PEN2.

The protein localises to the endoplasmic reticulum membrane. The protein resides in the golgi apparatus membrane. Probable subunit of the gamma-secretase complex, an endoprotease complex that catalyzes the intramembrane cleavage of integral membrane proteins such as Notch receptors. This is Presenilin-like protein At2g29900 from Arabidopsis thaliana (Mouse-ear cress).